We begin with the raw amino-acid sequence, 176 residues long: Japanin (176 aa).

An N-terminal signal peptide occupies residues 1–24 (MKVLRCLVCSFYIIVSLITTMTIG). Glu47 contacts cholesterol. Disulfide bonds link Cys52-Cys174 and Cys138-Cys162. N-linked (GlcNAc...) asparagine glycosylation is found at Asn59 and Asn155.

The protein belongs to the calycin superfamily. Lipocalin family. In terms of assembly, homodimer; non-disulfide-linked. Each monomer accommodates one molecule of cholesterol in a pocket. Expressed in salivary glands.

It localises to the secreted. Salivary tick protein that modulates host immune response. This protein blocks dendritic cell (DC) differentiation from monocytes. In addition, it inhibits up-regulation of costimulatory molecules and pro-inflammatory cytokines in response to stimuli and promotes up-regulation of co-inhibitory molecules and the anti-inflammatory cytokine interleukin-10. It has a pocket to accomodate cholesterol, which may have immune-modulatory roles, either directly or through interactions with the host gut microbiota. This Rhipicephalus appendiculatus (Brown ear tick) protein is Japanin.